Reading from the N-terminus, the 131-residue chain is MAGVKALVALSFSGAIGLTFLMLGCALEDYGVYWPLFVLIFYVISPIPYFIAKRVTYDSDATSSACRELAYFFTTGIVVSAFGLPVVLARVDVIKWGACGLVLAGNAVIFLTIQGFFLVFGRGDDFSWEQW.

4 helical membrane passes run 7–27 (LVAL…GCAL), 32–52 (VYWP…YFIA), 69–89 (LAYF…VVLA), and 100–120 (GLVL…FLVF).

This sequence belongs to the OB-RGRP/VPS55 family. Interacts with LEPR. Interacts with RAB13. In terms of tissue distribution, widely distributed in the brain, with elevated expression in the hypothalamic regions, including the paraventricular nucleus. In the placenta, present at high levels in the junctional zone situated towards the maternal aspect and throughout the labyrinth zone in close proximity to the developing fetus.

Its subcellular location is the golgi apparatus membrane. The protein localises to the endosome membrane. Functionally, negatively regulates leptin receptor (LEPR) cell surface expression, and thus decreases response to leptin. Negatively regulates growth hormone (GH) receptor cell surface expression in liver. May play a role in liver resistance to GH during periods of reduced nutrient availability. In Mus musculus (Mouse), this protein is Leptin receptor gene-related protein (Leprot).